The following is a 664-amino-acid chain: MTLYAKWEINVYTVSFATNGGSKVSEVDAEFASLIEEPTPPEKEGHSFKGWYQDELLTEAWDFEVETITENITLYAKWEINVYTVSFESNGGSQVSEVEAEYGSSITEPVPPEKEGHSFLGWYQDELLTEAWDFETSTVSEDMILYAKWEINEYTVSFELNGGSHVSEVEAEYGSTITEPAPPEKEGHSFLGWYQDELHTEAWDFETDVISENMTLYAQWSINNYDVHYDGNDYDSGEAPLTEAFAYDSEVTVAGQHTLGRNGYTFIGWNTERDGSGDQFEPGDTYRMGSEPLTLYAQWASNNAKLSELVISHGTLTPIFEADYAHYAVEVGHQVTSITITPTLQDTRSTVSISQNEAASGEVSSAIPLEEGLNTIIIDITAEDGSTYAYTVDVMRKVTDQFAQLTRESHFVTLDDEQIHMLDEEGTLRVDLQGELDDVTEVKFTQYQVQLLQEKGAFVQVVKEDLLVYIPFINFEPVKDLNITIQRQDYNIDTFAFADRSASAIYQLNIDQNGERISVFEHDIQLSFPVKNIGETNLEELQVYYFNPDGQEWELIGGTYNNGYIHATTSHFSTFAVFHPDHLSVEDDVTQDENGEEKSEEDNKEEIVEENTEEDNKEEKTIEAGEELPLTATRTYQFLLAGIIMLVGGSCIYVFYRRRNIMKT.

Residues 588-616 (DVTQDENGEEKSEEDNKEEIVEENTEEDN) are compositionally biased toward acidic residues. A disordered region spans residues 588-622 (DVTQDENGEEKSEEDNKEEIVEENTEEDNKEEKTI). Residues 636–656 (YQFLLAGIIMLVGGSCIYVFY) traverse the membrane as a helical segment.

The protein localises to the cell membrane. The polypeptide is Putative membrane protein Bcell_0381 (Evansella cellulosilytica (strain ATCC 21833 / DSM 2522 / FERM P-1141 / JCM 9156 / N-4) (Bacillus cellulosilyticus)).